A 353-amino-acid chain; its full sequence is Photosystem II protein D1 (353 aa).

Residue Thr2 is modified to N-acetylthreonine. Position 2 is a phosphothreonine (Thr2). A run of 3 helical transmembrane segments spans residues 29–46 (YIGW…TATS), 118–133 (HFLL…EWEL), and 142–156 (WIAV…AATA). His118 is a chlorophyll a binding site. Position 126 (Tyr126) interacts with pheophytin a. [CaMn4O5] cluster-binding residues include Asp170 and Glu189. The chain crosses the membrane as a helical span at residues 197 to 218 (FHMLGVAGVFGGSLFSAMHGSL). His198 serves as a coordination point for chlorophyll a. Residues His215 and 264–265 (SF) each bind a quinone. His215 is a binding site for Fe cation. Residue His272 coordinates Fe cation. A helical membrane pass occupies residues 274-288 (FLAAWPVVGIWFTAL). 4 residues coordinate [CaMn4O5] cluster: His332, Glu333, Asp342, and Ala344. The propeptide occupies 345–353 (AVEAPSING).

It belongs to the reaction center PufL/M/PsbA/D family. PSII is composed of 1 copy each of membrane proteins PsbA, PsbB, PsbC, PsbD, PsbE, PsbF, PsbH, PsbI, PsbJ, PsbK, PsbL, PsbM, PsbT, PsbX, PsbY, PsbZ, Psb30/Ycf12, at least 3 peripheral proteins of the oxygen-evolving complex and a large number of cofactors. It forms dimeric complexes. Requires The D1/D2 heterodimer binds P680, chlorophylls that are the primary electron donor of PSII, and subsequent electron acceptors. It shares a non-heme iron and each subunit binds pheophytin, quinone, additional chlorophylls, carotenoids and lipids. D1 provides most of the ligands for the Mn4-Ca-O5 cluster of the oxygen-evolving complex (OEC). There is also a Cl(-1) ion associated with D1 and D2, which is required for oxygen evolution. The PSII complex binds additional chlorophylls, carotenoids and specific lipids. as cofactor. Post-translationally, tyr-161 forms a radical intermediate that is referred to as redox-active TyrZ, YZ or Y-Z. C-terminally processed by CTPA; processing is essential to allow assembly of the oxygen-evolving complex and thus photosynthetic growth.

The protein localises to the plastid. Its subcellular location is the chloroplast thylakoid membrane. The catalysed reaction is 2 a plastoquinone + 4 hnu + 2 H2O = 2 a plastoquinol + O2. In terms of biological role, photosystem II (PSII) is a light-driven water:plastoquinone oxidoreductase that uses light energy to abstract electrons from H(2)O, generating O(2) and a proton gradient subsequently used for ATP formation. It consists of a core antenna complex that captures photons, and an electron transfer chain that converts photonic excitation into a charge separation. The D1/D2 (PsbA/PsbD) reaction center heterodimer binds P680, the primary electron donor of PSII as well as several subsequent electron acceptors. The protein is Photosystem II protein D1 of Chloranthus spicatus (Chulantree).